Here is a 662-residue protein sequence, read N- to C-terminus: Serine/threonine-protein kinase PTK1/STK1 (662 aa).

Positions Gly35–Ser119 are disordered. Residues Ser50–Ser60 show a composition bias toward low complexity. 2 stretches are compositionally biased toward polar residues: residues Pro61 to Thr91 and Gly98 to Ser119. The Protein kinase domain occupies Asp196 to Phe503. ATP is bound by residues Ile202–Val210 and Lys226. Asp329 functions as the Proton acceptor in the catalytic mechanism. Residues Thr605–His631 form a disordered region.

This sequence belongs to the protein kinase superfamily. Ser/Thr protein kinase family.

The catalysed reaction is L-seryl-[protein] + ATP = O-phospho-L-seryl-[protein] + ADP + H(+). The enzyme catalyses L-threonyl-[protein] + ATP = O-phospho-L-threonyl-[protein] + ADP + H(+). Its function is as follows. Essential determinant for low-affinity spermidine transport. The sequence is that of Serine/threonine-protein kinase PTK1/STK1 (PTK1) from Saccharomyces cerevisiae (strain ATCC 204508 / S288c) (Baker's yeast).